A 729-amino-acid chain; its full sequence is Dipeptidyl peptidase 3 (729 aa).

Histidine 459 is a Zn(2+) binding site. Glutamate 460 is an active-site residue. The Zn(2+) site is built by histidine 464 and glutamate 517.

Belongs to the peptidase M49 family. The cofactor is Zn(2+).

Its subcellular location is the cytoplasm. It catalyses the reaction Release of an N-terminal dipeptide from a peptide comprising four or more residues, with broad specificity. Also acts on dipeptidyl 2-naphthylamides.. This Nematostella vectensis (Starlet sea anemone) protein is Dipeptidyl peptidase 3 (dpp3).